The following is a 504-amino-acid chain: Multidrug efflux pump LfrA (504 aa).

A run of 14 helical transmembrane segments spans residues 19-39, 58-78, 87-107, 110-130, 145-165, 172-192, 206-226, 233-253, 275-295, 309-329, 338-358, 361-381, 408-428, and 480-500; these read WVAL…NTVL, LWIV…MGSL, LLLI…FAPS, LLVG…PSTL, LAIA…PIVG, FHWG…LVLG, PFDP…VWAV, GLSA…ALFV, TSSI…IFFI, TAGL…LAVV, DTLM…ILLF, NLTV…VGVS, AYEL…TAFY, and IAPT…VVGV.

The protein belongs to the major facilitator superfamily.

It is found in the cell inner membrane. Inhibited by the protonophore carbonyl cyanide m-chorophenylhydrazone (CCCP). Ethidium bromide efflux is inhibited by chlorpromazine, thioridazine and verapamil. Energy-dependent efflux pump that contributes to drug resistance. Catalyzes the efflux of norfloxacin and several related fluoroquinolones (FQ). Contributes significantly to the intrinsic MICs for ethidium bromide and acriflavine. Overexpression confers low-level resistance to hydrophilic FQ such as ciprofloxacin, ofloxacin and levofloxacin, and to ethidium bromide, acridine, acriflavine, rhodamine 123 and some quaternary ammonium compounds. May contribute to resistance to certain beta-lactams. Probably uses the proton motive force to export drugs. This chain is Multidrug efflux pump LfrA, found in Mycolicibacterium smegmatis (strain ATCC 700084 / mc(2)155) (Mycobacterium smegmatis).